The sequence spans 345 residues: Protein RecA (345 aa).

65–72 (GPESSGKT) contacts ATP.

It belongs to the RecA family.

The protein localises to the cytoplasm. Can catalyze the hydrolysis of ATP in the presence of single-stranded DNA, the ATP-dependent uptake of single-stranded DNA by duplex DNA, and the ATP-dependent hybridization of homologous single-stranded DNAs. It interacts with LexA causing its activation and leading to its autocatalytic cleavage. The chain is Protein RecA from Colwellia psychrerythraea (strain 34H / ATCC BAA-681) (Vibrio psychroerythus).